Reading from the N-terminus, the 306-residue chain is Methionyl-tRNA formyltransferase (306 aa).

108–111 (SLLP) serves as a coordination point for (6S)-5,6,7,8-tetrahydrofolate.

The protein belongs to the Fmt family.

It catalyses the reaction L-methionyl-tRNA(fMet) + (6R)-10-formyltetrahydrofolate = N-formyl-L-methionyl-tRNA(fMet) + (6S)-5,6,7,8-tetrahydrofolate + H(+). In terms of biological role, attaches a formyl group to the free amino group of methionyl-tRNA(fMet). The formyl group appears to play a dual role in the initiator identity of N-formylmethionyl-tRNA by promoting its recognition by IF2 and preventing the misappropriation of this tRNA by the elongation apparatus. This chain is Methionyl-tRNA formyltransferase, found in Paenarthrobacter aurescens (strain TC1).